The sequence spans 267 residues: Taurine import ATP-binding protein TauB (267 aa).

The ABC transporter domain occupies 6-238 (FNEASLIYPA…DILAGAPASE (233 aa)). 43–50 (GRSGSGKT) provides a ligand contact to ATP.

It belongs to the ABC transporter superfamily. Taurine importer (TC 3.A.1.17.1) family. The complex is composed of two ATP-binding proteins (TauB), two transmembrane proteins (TauC) and a solute-binding protein (TauA).

The protein resides in the cell inner membrane. The catalysed reaction is taurine(out) + ATP + H2O = taurine(in) + ADP + phosphate + H(+). Part of the ABC transporter complex TauABC involved in taurine import. Responsible for energy coupling to the transport system. The chain is Taurine import ATP-binding protein TauB from Sinorhizobium fredii (strain NBRC 101917 / NGR234).